Consider the following 157-residue polypeptide: Protein-export protein SecB (157 aa).

It belongs to the SecB family. Homotetramer, a dimer of dimers. One homotetramer interacts with 1 SecA dimer.

It is found in the cytoplasm. Its function is as follows. One of the proteins required for the normal export of preproteins out of the cell cytoplasm. It is a molecular chaperone that binds to a subset of precursor proteins, maintaining them in a translocation-competent state. It also specifically binds to its receptor SecA. The sequence is that of Protein-export protein SecB from Alcanivorax borkumensis (strain ATCC 700651 / DSM 11573 / NCIMB 13689 / SK2).